A 236-amino-acid chain; its full sequence is NAP1-binding protein 2 (236 aa).

At S102 the chain carries Phosphoserine. In terms of domain architecture, SH3 spans 110–171 (IVNQRAVALY…PEEFVSYIQP (62 aa)). Residues S196 and S235 each carry the phosphoserine modification.

In terms of assembly, interacts with PBS2 and PTC1.

It is found in the cytoplasm. Functionally, negatively regulates the high-osmolarity glycerol (HOG) pathway through its negative regulation of the HOG1 kinase activity. Mediates the binding between the PTC1 phosphatase and the PBS2 MAP/ERK kinase (MEK). With PTC1, regulates endoplasmic reticulum inheritance through the cell wall integrity (CWI) MAPK pathway by modulating the MAPK, SLT2. The chain is NAP1-binding protein 2 (NBP2) from Saccharomyces cerevisiae (strain ATCC 204508 / S288c) (Baker's yeast).